A 254-amino-acid polypeptide reads, in one-letter code: uncharacterized protein (254 aa).

This is an uncharacterized protein from Methanocaldococcus jannaschii (strain ATCC 43067 / DSM 2661 / JAL-1 / JCM 10045 / NBRC 100440) (Methanococcus jannaschii).